A 189-amino-acid chain; its full sequence is Putative manganese efflux pump MntP (189 aa).

Helical transmembrane passes span 2 to 22 (SLTE…AVSI), 36 to 56 (ILQM…IGYY), 71 to 91 (WIAF…SITA), 106 to 126 (LLLV…VSLS), 132 to 152 (ILYS…AAIL), and 167 to 187 (IVGG…HMFF).

It belongs to the MntP (TC 9.B.29) family.

The protein localises to the cell membrane. Its function is as follows. Probably functions as a manganese efflux pump. The protein is Putative manganese efflux pump MntP of Ruminiclostridium cellulolyticum (strain ATCC 35319 / DSM 5812 / JCM 6584 / H10) (Clostridium cellulolyticum).